Reading from the N-terminus, the 384-residue chain is SAGA complex subunit Spt3 (384 aa).

This sequence belongs to the SPT3 family. As to quaternary structure, component of the Spt-Ada-Gcn5 acetyltransferase (SAGA) complex consisting of wda/Taf5L, Saf6, Taf9, Taf10b, Taf12, Ada1, Spt3, Spt7, Spt20, Sf3b3, Sf3b5, Nipped-A/Tra1, a histone acetyltransferase (HAT) module made up of Gcn5, Ada2b (Isoform B), Ada3 and Sgf29, and a deubiquitinase (DUB) module made up of not/nonstop, Sgf11 and e(y)2 tethered to SAGA by Atxn7. Taf5 and Taf10, which has partially redundant properties with Taf10b, may also be part of this complex.

The protein resides in the nucleus. The protein localises to the chromosome. In terms of biological role, component of the transcription regulatory complex SAGA, a multiprotein complex that activates transcription by remodeling chromatin and mediating histone acetylation and deubiquitination. The SAGA complex predominantly acetylates histone H3. Required for oogenesis; involved in transcriptional activation. The chain is SAGA complex subunit Spt3 from Drosophila melanogaster (Fruit fly).